The sequence spans 101 residues: uncharacterized protein (101 aa).

This is an uncharacterized protein from Sulfolobus islandicus filamentous virus (isolate Iceland/Hveragerdi) (SIFV).